Here is a 757-residue protein sequence, read N- to C-terminus: Double zinc ribbon and ankyrin repeat-containing protein 1 (757 aa).

2 consecutive DZANK-type zinc fingers follow at residues 230-290 (CAHC…VVCE) and 359-407 (CSRC…GSCG). ANK repeat units follow at residues 631 to 662 (ENRL…DPNC) and 666 to 695 (QGRP…DIDQ).

Interacts with NINL. Associates with DYNC1H1 and multiple dynein intermediate and light chains as well as actin-binding proteins. Expressed in retina.

It localises to the cell projection. The protein resides in the cilium. Involved in vesicle transport in photoreceptor cells. The polypeptide is Double zinc ribbon and ankyrin repeat-containing protein 1 (Rattus norvegicus (Rat)).